A 282-amino-acid polypeptide reads, in one-letter code: Bifunctional protein FolD (282 aa).

NADP(+) is bound by residues G164–S166 and S189.

This sequence belongs to the tetrahydrofolate dehydrogenase/cyclohydrolase family. As to quaternary structure, homodimer.

It catalyses the reaction (6R)-5,10-methylene-5,6,7,8-tetrahydrofolate + NADP(+) = (6R)-5,10-methenyltetrahydrofolate + NADPH. It carries out the reaction (6R)-5,10-methenyltetrahydrofolate + H2O = (6R)-10-formyltetrahydrofolate + H(+). It functions in the pathway one-carbon metabolism; tetrahydrofolate interconversion. Its function is as follows. Catalyzes the oxidation of 5,10-methylenetetrahydrofolate to 5,10-methenyltetrahydrofolate and then the hydrolysis of 5,10-methenyltetrahydrofolate to 10-formyltetrahydrofolate. The polypeptide is Bifunctional protein FolD (Lachnoclostridium phytofermentans (strain ATCC 700394 / DSM 18823 / ISDg) (Clostridium phytofermentans)).